The sequence spans 476 residues: Aspartyl/glutamyl-tRNA(Asn/Gln) amidotransferase subunit B 1 (476 aa).

Belongs to the GatB/GatE family. GatB subfamily. As to quaternary structure, heterotrimer of A, B and C subunits.

It catalyses the reaction L-glutamyl-tRNA(Gln) + L-glutamine + ATP + H2O = L-glutaminyl-tRNA(Gln) + L-glutamate + ADP + phosphate + H(+). It carries out the reaction L-aspartyl-tRNA(Asn) + L-glutamine + ATP + H2O = L-asparaginyl-tRNA(Asn) + L-glutamate + ADP + phosphate + 2 H(+). Its function is as follows. Allows the formation of correctly charged Asn-tRNA(Asn) or Gln-tRNA(Gln) through the transamidation of misacylated Asp-tRNA(Asn) or Glu-tRNA(Gln) in organisms which lack either or both of asparaginyl-tRNA or glutaminyl-tRNA synthetases. The reaction takes place in the presence of glutamine and ATP through an activated phospho-Asp-tRNA(Asn) or phospho-Glu-tRNA(Gln). The chain is Aspartyl/glutamyl-tRNA(Asn/Gln) amidotransferase subunit B 1 (gatB1) from Clostridium acetobutylicum (strain ATCC 824 / DSM 792 / JCM 1419 / IAM 19013 / LMG 5710 / NBRC 13948 / NRRL B-527 / VKM B-1787 / 2291 / W).